The primary structure comprises 264 residues: Thiazole synthase (264 aa).

Catalysis depends on lysine 106, which acts as the Schiff-base intermediate with DXP. Residues glycine 167, 193-194 (AG), and 215-216 (NS) contribute to the 1-deoxy-D-xylulose 5-phosphate site.

The protein belongs to the ThiG family. As to quaternary structure, homotetramer. Forms heterodimers with either ThiH or ThiS.

Its subcellular location is the cytoplasm. It carries out the reaction [ThiS sulfur-carrier protein]-C-terminal-Gly-aminoethanethioate + 2-iminoacetate + 1-deoxy-D-xylulose 5-phosphate = [ThiS sulfur-carrier protein]-C-terminal Gly-Gly + 2-[(2R,5Z)-2-carboxy-4-methylthiazol-5(2H)-ylidene]ethyl phosphate + 2 H2O + H(+). It functions in the pathway cofactor biosynthesis; thiamine diphosphate biosynthesis. Its function is as follows. Catalyzes the rearrangement of 1-deoxy-D-xylulose 5-phosphate (DXP) to produce the thiazole phosphate moiety of thiamine. Sulfur is provided by the thiocarboxylate moiety of the carrier protein ThiS. In vitro, sulfur can be provided by H(2)S. This is Thiazole synthase from Prochlorococcus marinus (strain MIT 9312).